Here is a 186-residue protein sequence, read N- to C-terminus: Elongation factor P (186 aa).

The protein belongs to the elongation factor P family.

The protein localises to the cytoplasm. It participates in protein biosynthesis; polypeptide chain elongation. In terms of biological role, involved in peptide bond synthesis. Stimulates efficient translation and peptide-bond synthesis on native or reconstituted 70S ribosomes in vitro. Probably functions indirectly by altering the affinity of the ribosome for aminoacyl-tRNA, thus increasing their reactivity as acceptors for peptidyl transferase. The protein is Elongation factor P of Neisseria gonorrhoeae (strain ATCC 700825 / FA 1090).